Reading from the N-terminus, the 383-residue chain is 8-amino-7-oxononanoate synthase (383 aa).

Arg-21 is a substrate binding site. Pyridoxal 5'-phosphate is bound at residue 108-109 (GY). His-133 is a substrate binding site. Pyridoxal 5'-phosphate contacts are provided by Ser-179, His-207, and Thr-233. Residue Lys-236 is modified to N6-(pyridoxal phosphate)lysine. Substrate is bound at residue Thr-350.

It belongs to the class-II pyridoxal-phosphate-dependent aminotransferase family. BioF subfamily. Homodimer. Pyridoxal 5'-phosphate serves as cofactor.

The catalysed reaction is 6-carboxyhexanoyl-[ACP] + L-alanine + H(+) = (8S)-8-amino-7-oxononanoate + holo-[ACP] + CO2. The protein operates within cofactor biosynthesis; biotin biosynthesis. Catalyzes the decarboxylative condensation of pimeloyl-[acyl-carrier protein] and L-alanine to produce 8-amino-7-oxononanoate (AON), [acyl-carrier protein], and carbon dioxide. The sequence is that of 8-amino-7-oxononanoate synthase from Yersinia pseudotuberculosis serotype IB (strain PB1/+).